Reading from the N-terminus, the 180-residue chain is UPF0227 protein Spro_1925 (180 aa).

Belongs to the UPF0227 family.

This Serratia proteamaculans (strain 568) protein is UPF0227 protein Spro_1925.